A 105-amino-acid chain; its full sequence is Small ribosomal subunit protein uS10 (105 aa).

The protein belongs to the universal ribosomal protein uS10 family. In terms of assembly, part of the 30S ribosomal subunit.

Functionally, involved in the binding of tRNA to the ribosomes. This is Small ribosomal subunit protein uS10 from Chlamydia pneumoniae (Chlamydophila pneumoniae).